Here is a 710-residue protein sequence, read N- to C-terminus: Amyloid beta precursor protein binding family B member 1 (710 aa).

Serine 135 is subject to Phosphoserine. 2 disordered regions span residues 143–256 (EQGP…SDLP) and 276–300 (GTTQ…ESQL). The segment covering 145 to 173 (GPDEGEEKAAGEAEEDDEDEEEEEEEEDL) has biased composition (acidic residues). The residue at position 204 (lysine 204) is an N6-acetyllysine. Over residues 223-234 (SWATLSQGSPSY) the composition is skewed to polar residues. The region spanning 253-285 (SDLPAGWMRVQDTSGTYYWHIPTGTTQWEPPGR) is the WW domain. The segment covering 287–299 (SPSQGSSPQEESQ) has biased composition (low complexity). In terms of domain architecture, PID 1 spans 370-509 (FAVRSLGWVE…SKIMSERRNA (140 aa)). Serine 459 is modified (phosphoserine; by PKC). Serine 517 is subject to Phosphoserine. The region spanning 542-699 (KFQVYYLGNV…RRGVQSLWGS (158 aa)) is the PID 2 domain. Tyrosine 547 carries the phosphotyrosine; by ABL1 modification. A Phosphoserine; by SGK1 modification is found at serine 610. The residue at position 701 (lysine 701) is an N6-acetyllysine.

In terms of assembly, component of a complex, at least composed of APBB1, RASD1/DEXRAS1 and APP. Interacts (via PID domain 2) with APP (with the intracellular domain of the amyloid-beta precursor protein). Interacts (via PID domain 2) with RASD1/DEXRAS1; impairs the transcription activation activity. Interacts (via PID domain 1) with KAT5/TIP60. Interacts (via the WW domain) with the proline-rich region of APBB1IP. Interacts with TSHZ1 and TSHZ2. Interacts (via the WW domain) with histone H2AX (when phosphorylated on 'Tyr-142') and the proline-rich region of ENAH. Interacts with MAPK8. Interacts (via PID domain 1) with TSHZ3 (via homeobox domain). Interacts with SET. Found in a trimeric complex with HDAC1 and TSHZ3; the interaction between HDAC1 and APBB1 is mediated by TSHZ3. Interacts (via WWW domain) with NEK6. Interacts (via WWW domain) with ABL1. Interacts with RNF157. Interacts with ARF6. Polyubiquitination by RNF157 leads to degradation by the proteasome. Post-translationally, phosphorylation at Ser-610 by SGK1 promotes its localization to the nucleus. Phosphorylated following nuclear translocation. Phosphorylation at Tyr-546 by ABL1 enhances transcriptional activation activity and reduces the affinity for RASD1/DEXRAS1. In terms of processing, acetylation at Lys-204 and Lys-701 by KAT5 promotes its transcription activator activity. Phosphorylated at Ser-459 by PKC upon insulin activation. As to expression, expressed in the brain, retinal lens and muscle cells (at protein level).

The protein localises to the cell membrane. It localises to the cytoplasm. The protein resides in the nucleus. Its subcellular location is the cell projection. It is found in the growth cone. The protein localises to the nucleus speckle. Transcription coregulator that can have both coactivator and corepressor functions. Adapter protein that forms a transcriptionally active complex with the gamma-secretase-derived amyloid precursor protein (APP) intracellular domain. Plays a central role in the response to DNA damage by translocating to the nucleus and inducing apoptosis. May act by specifically recognizing and binding histone H2AX phosphorylated on 'Tyr-142' (H2AXY142ph) at double-strand breaks (DSBs), recruiting other pro-apoptosis factors such as MAPK8/JNK1. Required for histone H4 acetylation at double-strand breaks (DSBs). Its ability to specifically bind modified histones and chromatin modifying enzymes such as KAT5/TIP60, probably explains its transcription activation activity. Functions in association with TSHZ3, SET and HDAC factors as a transcriptional repressor, that inhibits the expression of CASP4. Associates with chromatin in a region surrounding the CASP4 transcriptional start site(s). Involved in hippocampal neurite branching and neuromuscular junction formation, as a result plays a role in spatial memory functioning. Plays a role in the maintenance of lens transparency. May play a role in muscle cell strength. Acts as a molecular adapter that functions in neurite outgrowth by activating the RAC1-ARF6 axis upon insulin treatment. The polypeptide is Amyloid beta precursor protein binding family B member 1 (Mus musculus (Mouse)).